We begin with the raw amino-acid sequence, 402 residues long: Formate-dependent phosphoribosylglycinamide formyltransferase (402 aa).

Residues 25-26 and Glu-85 contribute to the N(1)-(5-phospho-beta-D-ribosyl)glycinamide site; that span reads EL. ATP-binding positions include Arg-118, Lys-159, 164 to 169, 199 to 202, and Glu-207; these read SSGKGQ and EQFV. Residues 123–318 form the ATP-grasp domain; it reads RLASEELGLP…EFELHAKAVL (196 aa). The Mg(2+) site is built by Glu-277 and Glu-289. N(1)-(5-phospho-beta-D-ribosyl)glycinamide contacts are provided by residues Asp-296, Lys-365, and 372 to 373; that span reads RR.

Belongs to the PurK/PurT family. Homodimer.

It carries out the reaction N(1)-(5-phospho-beta-D-ribosyl)glycinamide + formate + ATP = N(2)-formyl-N(1)-(5-phospho-beta-D-ribosyl)glycinamide + ADP + phosphate + H(+). It participates in purine metabolism; IMP biosynthesis via de novo pathway; N(2)-formyl-N(1)-(5-phospho-D-ribosyl)glycinamide from N(1)-(5-phospho-D-ribosyl)glycinamide (formate route): step 1/1. In terms of biological role, involved in the de novo purine biosynthesis. Catalyzes the transfer of formate to 5-phospho-ribosyl-glycinamide (GAR), producing 5-phospho-ribosyl-N-formylglycinamide (FGAR). Formate is provided by PurU via hydrolysis of 10-formyl-tetrahydrofolate. The sequence is that of Formate-dependent phosphoribosylglycinamide formyltransferase from Corynebacterium efficiens (strain DSM 44549 / YS-314 / AJ 12310 / JCM 11189 / NBRC 100395).